The following is a 351-amino-acid chain: Photosystem II D2 protein (351 aa).

A helical transmembrane segment spans residues 39–59 (TAYLAVGGWFTGTTFVTSWYT). Residue His116 coordinates chlorophyll a. Residues 123 to 139 (GFCLRQFEIARLVGIRP) traverse the membrane as a helical segment. The pheophytin a site is built by Gln128 and Asn141. Residues 151-164 (IFVSVFLLYPLGQA) form a helical membrane-spanning segment. His196 is a binding site for chlorophyll a. The chain crosses the membrane as a helical span at residues 206-226 (GALLCAIHGATVENTLFEDGD). A plastoquinone-binding residues include His213 and Phe260. His213 is a Fe cation binding site. A Fe cation-binding site is contributed by His267. Residues 277 to 293 (GLWTSAIGIVGLALNLR) traverse the membrane as a helical segment.

It belongs to the reaction center PufL/M/PsbA/D family. As to quaternary structure, PSII is composed of 1 copy each of membrane proteins PsbA, PsbB, PsbC, PsbD, PsbE, PsbF, PsbH, PsbI, PsbJ, PsbK, PsbL, PsbM, PsbT, PsbX, PsbY, PsbZ, Psb30/Ycf12, at least 3 peripheral proteins of the oxygen-evolving complex and a large number of cofactors. It forms dimeric complexes. The cofactor is The D1/D2 heterodimer binds P680, chlorophylls that are the primary electron donor of PSII, and subsequent electron acceptors. It shares a non-heme iron and each subunit binds pheophytin, quinone, additional chlorophylls, carotenoids and lipids. There is also a Cl(-1) ion associated with D1 and D2, which is required for oxygen evolution. The PSII complex binds additional chlorophylls, carotenoids and specific lipids..

It localises to the plastid. It is found in the chloroplast thylakoid membrane. The enzyme catalyses 2 a plastoquinone + 4 hnu + 2 H2O = 2 a plastoquinol + O2. In terms of biological role, photosystem II (PSII) is a light-driven water:plastoquinone oxidoreductase that uses light energy to abstract electrons from H(2)O, generating O(2) and a proton gradient subsequently used for ATP formation. It consists of a core antenna complex that captures photons, and an electron transfer chain that converts photonic excitation into a charge separation. The D1/D2 (PsbA/PsbD) reaction center heterodimer binds P680, the primary electron donor of PSII as well as several subsequent electron acceptors. D2 is needed for assembly of a stable PSII complex. In Heterosigma akashiwo (strain NIES-293 / 8280G21-1), this protein is Photosystem II D2 protein.